Here is a 57-residue protein sequence, read N- to C-terminus: AAKYCKLPVRYGPCKKKIPSFYYKWKAKQCLPFDYSGCGGNANRFKTIEECRRTCVG.

Residues 5–55 (CKLPVRYGPCKKKIPSFYYKWKAKQCLPFDYSGCGGNANRFKTIEECRRTC) enclose the BPTI/Kunitz inhibitor domain. Cystine bridges form between Cys5–Cys55, Cys14–Cys38, and Cys30–Cys51.

Belongs to the venom Kunitz-type family. Expressed by the venom gland.

The protein resides in the secreted. Its function is as follows. Serine protease inhibitor homolog that blocks voltage-gated potassium channels (Kv). The polypeptide is Kunitz-type serine protease inhibitor homolog delta-dendrotoxin (Dendroaspis angusticeps (Eastern green mamba)).